The chain runs to 179 residues: Transcription factor E (179 aa).

The region spanning 1–102 (MAKKKVKYTF…YWRFDSRKAA (102 aa)) is the HTH TFE/IIEalpha-type domain.

The protein belongs to the TFE family. As to quaternary structure, monomer. Interaction with RNA polymerase subunits RpoF and RpoE is necessary for Tfe stimulatory transcription activity. Able to interact with Tbp and RNA polymerase in the absence of DNA promoter. Interacts both with the preinitiation and elongation complexes.

Its function is as follows. Transcription factor that plays a role in the activation of archaeal genes transcribed by RNA polymerase. Facilitates transcription initiation by enhancing TATA-box recognition by TATA-box-binding protein (Tbp), and transcription factor B (Tfb) and RNA polymerase recruitment. Not absolutely required for transcription in vitro, but particularly important in cases where Tbp or Tfb function is not optimal. It dynamically alters the nucleic acid-binding properties of RNA polymerases by stabilizing the initiation complex and destabilizing elongation complexes. Seems to translocate with the RNA polymerase following initiation and acts by binding to the non template strand of the transcription bubble in elongation complexes. This is Transcription factor E from Methanosphaera stadtmanae (strain ATCC 43021 / DSM 3091 / JCM 11832 / MCB-3).